A 160-amino-acid polypeptide reads, in one-letter code: Small ribosomal subunit protein uS7 (160 aa).

The protein belongs to the universal ribosomal protein uS7 family. As to quaternary structure, part of the 30S ribosomal subunit. Contacts proteins S9 and S11.

In terms of biological role, one of the primary rRNA binding proteins, it binds directly to 16S rRNA where it nucleates assembly of the head domain of the 30S subunit. Is located at the subunit interface close to the decoding center, probably blocks exit of the E-site tRNA. The protein is Small ribosomal subunit protein uS7 of Hydrogenobaculum sp. (strain Y04AAS1).